A 341-amino-acid chain; its full sequence is Processive diacylglycerol beta-glycosyltransferase (341 aa).

This sequence belongs to the glycosyltransferase 2 family. It depends on Mg(2+) as a cofactor.

The protein localises to the cell membrane. The catalysed reaction is a 1,2-diacyl-sn-glycerol + UDP-alpha-D-glucose = a 1,2-diacyl-3-O-(beta-D-glucopyranosyl)-sn-glycerol + UDP + H(+). It catalyses the reaction a 1,2-diacyl-sn-glycerol + UDP-alpha-D-galactose = a 1,2-diacyl-3-O-(beta-D-galactosyl)-sn-glycerol + UDP + H(+). It carries out the reaction a 1,2-diacyl-3-O-(beta-D-glucopyranosyl)-sn-glycerol + UDP-alpha-D-glucose = a 1,2-diacyl-3-O-(beta-D-Glc-(1-&gt;6)-beta-D-Glc)-sn-glycerol + UDP + H(+). The enzyme catalyses a 1,2-diacyl-3-O-(beta-D-galactosyl)-sn-glycerol + UDP-alpha-D-galactose = a 1,2-diacyl-3-O-[beta-D-galactosyl-(1-&gt;6)-beta-D-galactosyl]-sn-glycerol + UDP + H(+). It functions in the pathway glycolipid metabolism; diglucosyl-diacylglycerol biosynthesis. Its activity is regulated as follows. Activated by the negatively charged lipid dioleoylphosphatidylglycerol (DOPG) and inhibited by N-(n-nonyl)deoxygalactonojirimycin (C9J). Functionally, processive glycosyltransferase involved in the biosynthesis of both the non-bilayer-prone beta-monoglycosyldiacylglycerol and the bilayer-forming membrane lipid beta-diglycosyldiacylglycerol. These components contribute to regulate the properties and stability of the membrane. Catalyzes sequentially the transfers of glucosyl or galactosyl residues from UDP-Glc or UDP-Gal to diacylglycerol (DAG) acceptor to form the corresponding beta-glycosyl-DAG (3-O-(beta-D-glycopyranosyl)-1,2-diacyl-sn-glycerol), which then acts as acceptor to give beta-diglycosyl-DAG product (3-O-(beta-D-glycopyranosyl-beta-(1-&gt;6)-D-glycopyranosyl)-1,2-diacyl-sn-glycerol). Dioleoylglycerol (DOG) is a preferred sugar acceptor than 3-O-(beta-D-glucopyranosyl)-1,2-dioleoyl-sn-glycerol. This Mycoplasma genitalium (strain ATCC 33530 / DSM 19775 / NCTC 10195 / G37) (Mycoplasmoides genitalium) protein is Processive diacylglycerol beta-glycosyltransferase.